The primary structure comprises 293 residues: Dehydrodolichyl diphosphate synthase complex subunit NUS1 (293 aa).

3 consecutive transmembrane segments (helical) span residues 1–23, 35–56, and 117–135; these read MTGL…RTLT, WIWR…GFTL, and IASL…ISVY. N-linked (GlcNAc...) asparagine glycosylation is found at asparagine 144 and asparagine 271. The short motif at 290 to 292 is the RXG motif; crucial for prenyltransferase activity element; the sequence is RLG. Isopentenyl diphosphate contacts are provided by leucine 291 and glycine 292.

This sequence belongs to the UPP synthase family. The active dehydrodolichyl diphosphate synthase complex is a heterotetramer composed of a dimer of heterodimer of DHDDS and NUS1. Interacts with NPC2. It depends on Mg(2+) as a cofactor.

It localises to the endoplasmic reticulum membrane. The catalysed reaction is n isopentenyl diphosphate + (2E,6E)-farnesyl diphosphate = a di-trans,poly-cis-polyprenyl diphosphate + n diphosphate. The protein operates within protein modification; protein glycosylation. It functions in the pathway lipid metabolism. Activated by phospholipids including cardiolipin, phosphatidylcholine, phosphatidylethanolamine, phosphatidylinositol and phosphatidylserine. With DHDDS, forms the dehydrodolichyl diphosphate synthase (DDS) complex, an essential component of the dolichol monophosphate (Dol-P) biosynthetic machinery. Both subunits contribute to enzymatic activity, i.e. condensation of multiple copies of isopentenyl pyrophosphate (IPP) to farnesyl pyrophosphate (FPP) to produce dehydrodolichyl diphosphate (Dedol-PP), a precursor of dolichol phosphate which is utilized as a sugar carrier in protein glycosylation in the endoplasmic reticulum (ER). Synthesizes long-chain polyprenols, mostly of C95 and C100 chain length. Regulates the glycosylation and stability of nascent NPC2, thereby promoting trafficking of LDL-derived cholesterol. Acts as a specific receptor for the N-terminus of Nogo-B, a neural and cardiovascular regulator. This is Dehydrodolichyl diphosphate synthase complex subunit NUS1 from Homo sapiens (Human).